The sequence spans 209 residues: Probable nicotinate-nucleotide adenylyltransferase (209 aa).

It belongs to the NadD family.

The catalysed reaction is nicotinate beta-D-ribonucleotide + ATP + H(+) = deamido-NAD(+) + diphosphate. It functions in the pathway cofactor biosynthesis; NAD(+) biosynthesis; deamido-NAD(+) from nicotinate D-ribonucleotide: step 1/1. Functionally, catalyzes the reversible adenylation of nicotinate mononucleotide (NaMN) to nicotinic acid adenine dinucleotide (NaAD). This Hydrogenovibrio crunogenus (strain DSM 25203 / XCL-2) (Thiomicrospira crunogena) protein is Probable nicotinate-nucleotide adenylyltransferase.